The primary structure comprises 323 residues: Melanocortin receptor 3 (323 aa).

The Extracellular segment spans residues 1 to 37; sequence MNSSCCLSSVSPMLPNLSEHPAAPPASNRSGSGFCEQ. N-linked (GlcNAc...) asparagine glycans are attached at residues Asn2, Asn16, and Asn28. The helical transmembrane segment at 38–63 threads the bilayer; the sequence is VFIKPEVFLALGIVSLMENILVILAV. Over 64–75 the chain is Cytoplasmic; the sequence is VRNGNLHSPMYF. Residues 76 to 100 traverse the membrane as a helical segment; sequence FLCSLAAADMLVSLSNSLETIMIAV. Over 101 to 118 the chain is Extracellular; that stretch reads INSDSLTLEDQFIQHMDN. The helical transmembrane segment at 119–140 threads the bilayer; sequence IFDSMICISLVASICNLLAIAI. The Cytoplasmic segment spans residues 141-160; sequence DRYVTIFYALRYHSIMTVRK. A helical transmembrane segment spans residues 161 to 181; the sequence is ALTLIGVIWVCCGICGVMFII. The Extracellular portion of the chain corresponds to 182–186; it reads YSESK. The chain crosses the membrane as a helical span at residues 187 to 210; the sequence is MVIVCLITMFFAMVLLMGTLYIHM. Residues 211 to 245 are Cytoplasmic-facing; the sequence is FLFARLHVQRIAVLPPAGVVAPQQHSCMKGAVTIT. Residues 246-268 traverse the membrane as a helical segment; the sequence is ILLGVFIFCWAPFFLHLVLIITC. The Extracellular portion of the chain corresponds to 269–277; sequence PTNPYCICY. Residues 278–301 form a helical membrane-spanning segment; that stretch reads TAHFNTYLVLIMCNSVIDPLIYAF. At 302-323 the chain is on the cytoplasmic side; sequence RSLELRNTFKEILCGCNSMNLG. Cys315 carries S-palmitoyl cysteine lipidation.

It belongs to the G-protein coupled receptor 1 family. As to expression, brain.

It is found in the cell membrane. Receptor for MSH (alpha, beta and gamma) and ACTH. This receptor is mediated by G proteins which activate adenylate cyclase. Required for expression of anticipatory patterns of activity and wakefulness during periods of limited nutrient availability and for the normal regulation of circadian clock activity in the brain. This chain is Melanocortin receptor 3 (Mc3r), found in Mus musculus (Mouse).